The primary structure comprises 323 residues: Acetyl-coenzyme A carboxylase carboxyl transferase subunit alpha (323 aa).

Positions R39–Q293 constitute a CoA carboxyltransferase C-terminal domain.

This sequence belongs to the AccA family. In terms of assembly, acetyl-CoA carboxylase is a heterohexamer composed of biotin carboxyl carrier protein (AccB), biotin carboxylase (AccC) and two subunits each of ACCase subunit alpha (AccA) and ACCase subunit beta (AccD).

It is found in the cytoplasm. The enzyme catalyses N(6)-carboxybiotinyl-L-lysyl-[protein] + acetyl-CoA = N(6)-biotinyl-L-lysyl-[protein] + malonyl-CoA. It participates in lipid metabolism; malonyl-CoA biosynthesis; malonyl-CoA from acetyl-CoA: step 1/1. Its function is as follows. Component of the acetyl coenzyme A carboxylase (ACC) complex. First, biotin carboxylase catalyzes the carboxylation of biotin on its carrier protein (BCCP) and then the CO(2) group is transferred by the carboxyltransferase to acetyl-CoA to form malonyl-CoA. In Burkholderia multivorans (strain ATCC 17616 / 249), this protein is Acetyl-coenzyme A carboxylase carboxyl transferase subunit alpha.